The following is a 363-amino-acid chain: NAD(P)H-quinone oxidoreductase subunit 1, chloroplastic (363 aa).

6 helical membrane passes run 27–47, 98–118, 127–147, 248–268, 300–320, and 336–356; these read IWLF…VLVI, FSIG…VIPF, LSIG…GLLM, YSGI…LVSS, VFGT…FLFI, and LLNL…LLTT.

This sequence belongs to the complex I subunit 1 family. In terms of assembly, NDH is composed of at least 16 different subunits, 5 of which are encoded in the nucleus.

Its subcellular location is the plastid. It localises to the chloroplast thylakoid membrane. It catalyses the reaction a plastoquinone + NADH + (n+1) H(+)(in) = a plastoquinol + NAD(+) + n H(+)(out). The catalysed reaction is a plastoquinone + NADPH + (n+1) H(+)(in) = a plastoquinol + NADP(+) + n H(+)(out). Functionally, NDH shuttles electrons from NAD(P)H:plastoquinone, via FMN and iron-sulfur (Fe-S) centers, to quinones in the photosynthetic chain and possibly in a chloroplast respiratory chain. The immediate electron acceptor for the enzyme in this species is believed to be plastoquinone. Couples the redox reaction to proton translocation, and thus conserves the redox energy in a proton gradient. This chain is NAD(P)H-quinone oxidoreductase subunit 1, chloroplastic, found in Amborella trichopoda.